The sequence spans 196 residues: Nucleoid occlusion factor SlmA (196 aa).

The region spanning 7-68 is the HTH tetR-type domain; that stretch reads TNRREEILQA…GLIEFIEDSI (62 aa). Positions 31–50 form a DNA-binding region, H-T-H motif; the sequence is TTAKLAAQVGVSEAALYRHF. Positions 115–142 form a coiled coil; it reads EQDRLQSRINQLFERIETQLRQVLRERK.

The protein belongs to the nucleoid occlusion factor SlmA family. In terms of assembly, homodimer. Interacts with FtsZ.

It localises to the cytoplasm. The protein resides in the nucleoid. Required for nucleoid occlusion (NO) phenomenon, which prevents Z-ring formation and cell division over the nucleoid. Acts as a DNA-associated cell division inhibitor that binds simultaneously chromosomal DNA and FtsZ, and disrupts the assembly of FtsZ polymers. SlmA-DNA-binding sequences (SBS) are dispersed on non-Ter regions of the chromosome, preventing FtsZ polymerization at these regions. This is Nucleoid occlusion factor SlmA from Photobacterium profundum (strain SS9).